A 113-amino-acid chain; its full sequence is UPF0482 protein YnfB (113 aa).

The signal sequence occupies residues 1–28 (MKITLSKRIGLLAFLLPCALALSTTVHA).

It belongs to the UPF0482 family.

The sequence is that of UPF0482 protein YnfB from Shigella dysenteriae serotype 1 (strain Sd197).